Here is a 919-residue protein sequence, read N- to C-terminus: Plasma membrane ATPase 1 (919 aa).

Residues 1-16 (MADNAGEYHDAEKHAP) are compositionally biased toward basic and acidic residues. The segment at 1 to 73 (MADNAGEYHD…APAAGEAKAV (73 aa)) is disordered. Residues 1 to 113 (MADNAGEYHD…KEELENPFLK (113 aa)) lie on the Cytoplasmic side of the membrane. The span at 34-63 (QDDEPDDDIDALIEELFSEDVQEEQEDNDD) shows a compositional bias: acidic residues. The residue at position 89 (Ser-89) is a Phosphoserine. The helical transmembrane segment at 114 to 134 (FIMFFVGPIQFVMEMAAALAA) threads the bilayer. The Extracellular segment spans residues 135–138 (GLRD). The chain crosses the membrane as a helical span at residues 139–158 (WVDFGVICALLMLNAVVGFV). At 159–289 (QEYQAGSIVD…GTGHFTEVLN (131 aa)) the chain is on the cytoplasmic side. The chain crosses the membrane as a helical span at residues 290 to 311 (GIGTILLVLVLLTLFCIYTAAF). At 312-322 (YRSVRLARLLE) the chain is on the extracellular side. A helical transmembrane segment spans residues 323-345 (YTLAITIIGVPVGLPAVVTTTMA). At 346–717 (VGAAYLAEKQ…LIIRNQLLNL (372 aa)) the chain is on the cytoplasmic side. The active-site 4-aspartylphosphate intermediate is Asp-376. Ser-494 bears the Phosphoserine mark. Asp-632 and Asp-636 together coordinate Mg(2+). The chain crosses the membrane as a helical span at residues 718 to 736 (ELVVFIAIFADVATLAIAY). Over 737-752 (DNAPYSMKPVKWNLPR) the chain is Extracellular. A helical transmembrane segment spans residues 753 to 772 (LWGLSTVIGIVLAIGTWITN). Residues 773 to 824 (TTMIAQGQNRGIVQNFGVQDEVLFLEISLTENWLIFVTRCNGPFWSSIPSWQ) are Cytoplasmic-facing. A helical membrane pass occupies residues 825-845 (LSGAVLAVDILATMFCIFGWF). The Extracellular segment spans residues 846-858 (KGGHQTSIVAVLR). The chain crosses the membrane as a helical span at residues 859–875 (IWMYSFGIFCIMAGTYY). Residues 876 to 919 (ILSESAGFDRMMNGKPKESRNQRSIEDLVVALQRTSTRHEKGDA) lie on the Cytoplasmic side of the membrane. Residue Ser-899 is modified to Phosphoserine.

This sequence belongs to the cation transport ATPase (P-type) (TC 3.A.3) family. Type IIIA subfamily.

It localises to the cell membrane. It catalyses the reaction ATP + H2O + H(+)(in) = ADP + phosphate + 2 H(+)(out). The plasma membrane ATPase of plants and fungi is a hydrogen ion pump. The proton gradient it generates drives the active transport of nutrients by H(+)-symport. The resulting external acidification and/or internal alkinization may mediate growth responses. This is Plasma membrane ATPase 1 (pma1) from Schizosaccharomyces pombe (strain 972 / ATCC 24843) (Fission yeast).